A 455-amino-acid chain; its full sequence is Phosphoglucosamine mutase (455 aa).

Ser-106 acts as the Phosphoserine intermediate in catalysis. The Mg(2+) site is built by Ser-106, Asp-245, Asp-247, and Asp-249. Ser-106 is modified (phosphoserine).

It belongs to the phosphohexose mutase family. It depends on Mg(2+) as a cofactor. Activated by phosphorylation.

It catalyses the reaction alpha-D-glucosamine 1-phosphate = D-glucosamine 6-phosphate. Functionally, catalyzes the conversion of glucosamine-6-phosphate to glucosamine-1-phosphate. This is Phosphoglucosamine mutase from Acaryochloris marina (strain MBIC 11017).